The primary structure comprises 365 residues: tRNA-specific 2-thiouridylase MnmA (365 aa).

Residues 14-21 (AMSGGVDS) and Leu40 contribute to the ATP site. Cys108 (nucleophile) is an active-site residue. Cys108 and Cys204 are oxidised to a cystine. Gly132 is a binding site for ATP. The interval 154–156 (KDQ) is interaction with tRNA. Cys204 (cysteine persulfide intermediate) is an active-site residue.

It belongs to the MnmA/TRMU family.

The protein localises to the cytoplasm. The catalysed reaction is S-sulfanyl-L-cysteinyl-[protein] + uridine(34) in tRNA + AH2 + ATP = 2-thiouridine(34) in tRNA + L-cysteinyl-[protein] + A + AMP + diphosphate + H(+). Functionally, catalyzes the 2-thiolation of uridine at the wobble position (U34) of tRNA, leading to the formation of s(2)U34. The polypeptide is tRNA-specific 2-thiouridylase MnmA (Rickettsia felis (strain ATCC VR-1525 / URRWXCal2) (Rickettsia azadi)).